A 346-amino-acid polypeptide reads, in one-letter code: E3 ubiquitin-protein ligase RNF146-A (346 aa).

The RING-type zinc-finger motif lies at 37–75 (CAICLQTCVHPVSLPCKHVFCYLCVKGASWLGKRCALCR). One can recognise a WWE domain in the interval 91–167 (PELKAASRGN…EHGRRRKIKR (77 aa)). Disordered regions lie at residues 195–240 (SSAD…GTSL) and 256–301 (ERSH…ALVA). Residues 202–216 (SVPAQSGASVQSSSV) are compositionally biased toward low complexity. A compositionally biased stretch (acidic residues) spans 281-295 (SIEETESDASSDSED).

Interacts with poly-ADP-ribosylated AXIN1, AXIN2, BLZF1 and CASC3. Post-translationally, ubiquitinated; autoubiquitinated. Autoubiquitination is enhanced upon poly(ADP-ribose)-binding.

The protein localises to the cytoplasm. It localises to the cytosol. The enzyme catalyses S-ubiquitinyl-[E2 ubiquitin-conjugating enzyme]-L-cysteine + [acceptor protein]-L-lysine = [E2 ubiquitin-conjugating enzyme]-L-cysteine + N(6)-ubiquitinyl-[acceptor protein]-L-lysine.. The protein operates within protein modification; protein ubiquitination. Its function is as follows. E3 ubiquitin-protein ligase that specifically binds poly-ADP-ribosylated proteins and mediates their ubiquitination and subsequent degradation. Acts as an activator of the Wnt signaling pathway by mediating the ubiquitination of poly-ADP-ribosylated AXIN1 and AXIN2, 2 key components of the beta-catenin destruction complex. Acts in cooperation with tankyrase proteins (TNKS and TNKS2), which mediate poly-ADP-ribosylation of target proteins AXIN1, AXIN2, BLZF1, CASC3, TNKS and TNKS2. Recognizes and binds tankyrase-dependent poly-ADP-ribosylated proteins via its WWE domain and mediates their ubiquitination. In Bos taurus (Bovine), this protein is E3 ubiquitin-protein ligase RNF146-A (RNF146A).